We begin with the raw amino-acid sequence, 534 residues long: uncharacterized protein (534 aa).

A signal peptide spans 1 to 22 (MGLRLLFSLICVFCISNIFTQA). The N-linked (GlcNAc...) asparagine glycan is linked to Asn31. Disordered regions lie at residues 70–145 (PTYY…SSVS) and 176–418 (SSLS…SSAP). Asn426 carries an N-linked (GlcNAc...) asparagine glycan.

The protein localises to the endoplasmic reticulum. It localises to the cell membrane. This is an uncharacterized protein from Schizosaccharomyces pombe (strain 972 / ATCC 24843) (Fission yeast).